We begin with the raw amino-acid sequence, 159 residues long: Dihydrofolate reductase (159 aa).

Residues 2 to 157 form the DHFR domain; it reads TLSILVAHDL…IPHTFLHLIR (156 aa). 6 to 8 is a substrate binding site; the sequence is LVA. NADP(+)-binding positions include 7–8 and 15–20; these read VA and IGFENQ. Aspartate 28 provides a ligand contact to substrate. Residue 44-47 coordinates NADP(+); sequence GRKT. Arginine 58 lines the substrate pocket. NADP(+)-binding positions include 63 to 66 and 93 to 98; these read LTSD and FGGQIL. A substrate-binding site is contributed by threonine 112.

The protein belongs to the dihydrofolate reductase family.

The enzyme catalyses (6S)-5,6,7,8-tetrahydrofolate + NADP(+) = 7,8-dihydrofolate + NADPH + H(+). The protein operates within cofactor biosynthesis; tetrahydrofolate biosynthesis; 5,6,7,8-tetrahydrofolate from 7,8-dihydrofolate: step 1/1. Functionally, key enzyme in folate metabolism. Catalyzes an essential reaction for de novo glycine and purine synthesis, and for DNA precursor synthesis. This Staphylococcus aureus (strain MW2) protein is Dihydrofolate reductase (folA).